The sequence spans 255 residues: tRNA (guanine-N(1)-)-methyltransferase (255 aa).

S-adenosyl-L-methionine contacts are provided by residues glycine 113 and 133-138 (IGDYVL).

This sequence belongs to the RNA methyltransferase TrmD family. Homodimer.

The protein resides in the cytoplasm. It carries out the reaction guanosine(37) in tRNA + S-adenosyl-L-methionine = N(1)-methylguanosine(37) in tRNA + S-adenosyl-L-homocysteine + H(+). Functionally, specifically methylates guanosine-37 in various tRNAs. The protein is tRNA (guanine-N(1)-)-methyltransferase of Klebsiella pneumoniae subsp. pneumoniae (strain ATCC 700721 / MGH 78578).